Reading from the N-terminus, the 523-residue chain is Apoptosis inhibitor 5 (523 aa).

Positions 1–360 (MPTVEELYRN…HQLGRKLPDF (360 aa)) are ARM-like and Heat-like helical repeats. Residues 446-523 (VQKADANQKR…RGNRSRGRIY (78 aa)) are disordered. A Nuclear localization signal motif is present at residues 454 to 475 (KRTSEDTTSSSPPKKASAGPKR). Residues 460-471 (TTSSSPPKKASA) are compositionally biased toward low complexity. Polar residues predominate over residues 487-497 (KYSSNLGSFSY). Residues 502–515 (GFRGGRGRGWGGRG) are compositionally biased toward gly residues.

This sequence belongs to the API5 family. Monomer.

It localises to the nucleus. It is found in the cytoplasm. Its function is as follows. Antiapoptotic factor that may have a role in protein assembly. The sequence is that of Apoptosis inhibitor 5 (API5) from Gallus gallus (Chicken).